Consider the following 399-residue polypeptide: Serine palmitoyltransferase (399 aa).

Residues 113 to 114 (GF), His213, Thr241, and Ser243 each bind pyridoxal 5'-phosphate. Lys244 is subject to N6-(pyridoxal phosphate)lysine.

It belongs to the class-II pyridoxal-phosphate-dependent aminotransferase family. In terms of assembly, homodimer. Pyridoxal 5'-phosphate serves as cofactor.

The protein resides in the cytoplasm. The protein localises to the cell inner membrane. It carries out the reaction L-serine + hexadecanoyl-CoA + H(+) = 3-oxosphinganine + CO2 + CoA. It functions in the pathway lipid metabolism; sphingolipid metabolism. Its function is as follows. Catalyzes the condensation of L-serine with palmitoyl-CoA (hexadecanoyl-CoA) to produce 3-oxosphinganine. Exhibits a broad substrate specificity concerning the chain length and the degree of unsaturation of acyl-CoA. In Sphingobacterium multivorum, this protein is Serine palmitoyltransferase.